Consider the following 273-residue polypeptide: Undecaprenyl-diphosphatase (273 aa).

Transmembrane regions (helical) follow at residues 13–35 (GLVEGFTEFLPISSTGHLIVFGN), 45–62 (VFEIAIQLGAVLAVVFEY), 82–102 (FVLNLAIAFIPAAVMGLLFDK), 108–128 (LFNPLSVAVMLVLGGFFILWV), 186–206 (TEFSFFLAVPMMVAATAYDVL), 219–239 (LILIGFIAAFVSGLVAVKALL), and 250–270 (FAYYRIVFGIVIIILWLSGWI).

Belongs to the UppP family.

It is found in the cell inner membrane. It carries out the reaction di-trans,octa-cis-undecaprenyl diphosphate + H2O = di-trans,octa-cis-undecaprenyl phosphate + phosphate + H(+). Catalyzes the dephosphorylation of undecaprenyl diphosphate (UPP). Confers resistance to bacitracin. The chain is Undecaprenyl-diphosphatase from Neisseria gonorrhoeae (strain ATCC 700825 / FA 1090).